We begin with the raw amino-acid sequence, 396 residues long: Argininosuccinate synthase (396 aa).

ATP contacts are provided by residues 10–18 (AYSGGLDTS) and alanine 37. Residues tyrosine 88 and serine 93 each coordinate L-citrulline. Residue glycine 118 coordinates ATP. L-aspartate contacts are provided by threonine 120, asparagine 124, and aspartate 125. L-citrulline is bound at residue asparagine 124. L-citrulline contacts are provided by arginine 128, serine 176, serine 185, glutamate 261, and tyrosine 273.

The protein belongs to the argininosuccinate synthase family. Type 1 subfamily. Homotetramer.

Its subcellular location is the cytoplasm. The enzyme catalyses L-citrulline + L-aspartate + ATP = 2-(N(omega)-L-arginino)succinate + AMP + diphosphate + H(+). It functions in the pathway amino-acid biosynthesis; L-arginine biosynthesis; L-arginine from L-ornithine and carbamoyl phosphate: step 2/3. This Nitratidesulfovibrio vulgaris (strain DP4) (Desulfovibrio vulgaris) protein is Argininosuccinate synthase.